Reading from the N-terminus, the 291-residue chain is Small ribosomal subunit protein uS2 (291 aa).

The tract at residues 235–291 (NLQEDEESGDSGVDPYQDREEEITDYSNYTPKDEASGDDEDEEDNSLVNDEDLYDDK) is disordered. Acidic residues predominate over residues 270-291 (SGDDEDEEDNSLVNDEDLYDDK).

This sequence belongs to the universal ribosomal protein uS2 family.

The sequence is that of Small ribosomal subunit protein uS2 from Treponema denticola (strain ATCC 35405 / DSM 14222 / CIP 103919 / JCM 8153 / KCTC 15104).